The sequence spans 105 residues: ATP synthase subunit c (105 aa).

Transmembrane regions (helical) follow at residues 32–52 (SILG…IGMG) and 78–98 (VAMA…IIAI).

This sequence belongs to the ATPase C chain family. As to quaternary structure, F-type ATPases have 2 components, F(1) - the catalytic core - and F(0) - the membrane proton channel. F(1) has five subunits: alpha(3), beta(3), gamma(1), delta(1), epsilon(1). F(0) has three main subunits: a(1), b(2) and c(10-14). The alpha and beta chains form an alternating ring which encloses part of the gamma chain. F(1) is attached to F(0) by a central stalk formed by the gamma and epsilon chains, while a peripheral stalk is formed by the delta and b chains.

The protein localises to the cell inner membrane. F(1)F(0) ATP synthase produces ATP from ADP in the presence of a proton or sodium gradient. F-type ATPases consist of two structural domains, F(1) containing the extramembraneous catalytic core and F(0) containing the membrane proton channel, linked together by a central stalk and a peripheral stalk. During catalysis, ATP synthesis in the catalytic domain of F(1) is coupled via a rotary mechanism of the central stalk subunits to proton translocation. Functionally, key component of the F(0) channel; it plays a direct role in translocation across the membrane. A homomeric c-ring of between 10-14 subunits forms the central stalk rotor element with the F(1) delta and epsilon subunits. The chain is ATP synthase subunit c from Helicobacter pylori (strain ATCC 700392 / 26695) (Campylobacter pylori).